Reading from the N-terminus, the 320-residue chain is Solute carrier family 35 member B1 (320 aa).

Transmembrane regions (helical) follow at residues 9 to 29, 49 to 69, 81 to 103, 134 to 154, 166 to 186, 202 to 222, 241 to 261, and 283 to 303; these read GLRL…YGIL, FALS…KLLI, QSWL…NSAL, YPLT…LFMY, TVGY…LTGV, MMLS…VLTG, IVLF…TVVY, and VILF…LVFL. The Di-lysine motif signature appears at 316–320; sequence KKPSH.

This sequence belongs to the nucleotide-sugar transporter family. SLC35B subfamily.

The protein resides in the endoplasmic reticulum membrane. Functionally, probable sugar transporter. The polypeptide is Solute carrier family 35 member B1 (slc35b1) (Xenopus laevis (African clawed frog)).